We begin with the raw amino-acid sequence, 268 residues long: Gasdermin bGSDM (268 aa).

Cys3 carries S-palmitoyl cysteine lipidation. The next 4 beta stranded transmembrane spans lie at 78–94 (IDLR…AAKI), 103–121 (APSF…FHIE), 168–185 (KMRM…GVDV), and 195–211 (AKLE…RLVF). The segment at 248 to 268 (GENMALNLFTEIQDAGFIEVT) is C-terminal region.

This sequence belongs to the bacterial gasdermin family. Monomer in solution. In terms of assembly, forms large, homooligomeric ring-shaped pores when inserted in membranes. Cleavage by the adjacently encoded protease (G563DRAFT_02009) between Leu-247 and Gly-248 relieves autoinhibition, releasing the N-terminus which initiates loss of cell integrity. Post-translationally, palmitoylation helps stabilize the inactive state; may self-palmitoylate. Palmitoylation is not required for permeabilization of liposomes by the ring-like pores in vitro. Palmitoylation plays a significant role in pore formation.

The protein resides in the cytoplasm. Its subcellular location is the cell inner membrane. Its activity is regulated as follows. The full-length protein before cleavage is inactive: intramolecular interactions between the N-terminal domain and the C-terminal region, as well as the lipid modification, mediate autoinhibition. The pyroptosis-like-inducing activity is carried by the released N-terminal domain (gasdermin bGSDM, N-terminus). Functionally, precursor of a pore-forming protein involved in defense against bacteriophages. Cleavage of this precursor by its dedicated, neighboring protease (G563DRAFT_02009) releases the active moiety (gasdermin bGSDM, N-terminus) which inserts into membranes, forming pores and triggering cell death. Expression of bGSDM and its protease is highly toxic in E.coli. Cells expressing the gene pair stop dividing and lose membrane integrity. Both proteins are required to kill E.coli. Pore-forming protein that causes membrane permeabilization via a pyroptosis-like activity. Makes ring-like pores with walls about 50 Angstroms thick and an interior pore diameter of 200-300 Angstroms, when integrated in liposomes. The sequence is that of Gasdermin bGSDM from Runella zeae (strain ATCC BAA-293 / DSM 19591 / LMG 21438 / NS12).